The primary structure comprises 1269 residues: Phospholipase D A (1269 aa).

Residues 55–64 show a composition bias toward polar residues; it reads YTSVGSAPTT. The tract at residues 55–121 is disordered; the sequence is YTSVGSAPTT…NNNLQSPTQS (67 aa). Composition is skewed to low complexity over residues 65–87 and 95–114; these read NNNSNSNSNSNSSNRSLNNSGSS and NSNKKVNNNNNNNNNNNNNN. Residues 131 to 192 are a coiled coil; sequence SKALHDFEEK…ELKSLDELLH (62 aa). Over residues 222 to 232 the composition is skewed to polar residues; it reads NSVTNNTPSSA. Disordered stretches follow at residues 222–269 and 300–320; these read NSVT…SSST and NSYPNSIIPQGTPLDNPDPNL. Residues 233 to 269 are compositionally biased toward low complexity; the sequence is TPLTLSNNNNYTSSSLATSPTTNSSSSSSSSSSSSST. PLD phosphodiesterase domains are found at residues 435–462 and 704–731; these read IYWSHHQKTLIIDQEIAFVGGVDFCFGR and EQIYVHSKLMIVDDRTIIVGSANINDRS. Catalysis depends on residues H440, K442, D447, H709, K711, and D716. The stretch at 803-835 forms a coiled coil; the sequence is NNNNNSNINNNINNNNNEINNNNNNNNNNNSNE. Composition is skewed to low complexity over residues 810–850, 859–906, and 934–943; these read INNN…NSNS, NLPP…GTTN, and SSPQDSPQDS. Disordered stretches follow at residues 810 to 966 and 983 to 1007; these read INNN…HQSP and SNEQLPPPPSSTTPPPPPPPLTTTD. A compositionally biased stretch (pro residues) spans 987 to 1003; sequence LPPPPSSTTPPPPPPPL. A coiled-coil region spans residues 1059–1096; sequence TTAQQQQQQQQQQQQQQQQQQQQQQQQQQQQQQQQQQQ. The disordered stretch occupies residues 1116 to 1167; sequence IKKKRSSISPSTSSNKLLLSGNGSGDSIRVVTDSGSSPRGQPRSMSSLHDHA. Residues 1122–1142 show a composition bias toward low complexity; sequence SISPSTSSNKLLLSGNGSGDS. Over residues 1148–1162 the composition is skewed to polar residues; sequence DSGSSPRGQPRSMSS.

The protein belongs to the phospholipase D family.

The enzyme catalyses a 1,2-diacyl-sn-glycero-3-phosphocholine + H2O = a 1,2-diacyl-sn-glycero-3-phosphate + choline + H(+). Its activity is regulated as follows. Inhibited by butan-1-ol. In terms of biological role, plays a role in cell growth. Hydrolyzes membrane phospholipids, such as PtdCho free headgroup and PtdOH (phosphatidic acid; signaling molecule on its own). Involved in the inhibition of actin-based motility and endocytosis. Its inhibition causes complete collapse of F-actin organization. This chain is Phospholipase D A (pldA), found in Dictyostelium discoideum (Social amoeba).